A 351-amino-acid chain; its full sequence is Uroporphyrinogen decarboxylase (351 aa).

Substrate-binding positions include 26–30, aspartate 76, tyrosine 153, serine 208, and histidine 323; that span reads RQAGR.

It belongs to the uroporphyrinogen decarboxylase family. In terms of assembly, homodimer.

It is found in the cytoplasm. The catalysed reaction is uroporphyrinogen III + 4 H(+) = coproporphyrinogen III + 4 CO2. Its pathway is porphyrin-containing compound metabolism; protoporphyrin-IX biosynthesis; coproporphyrinogen-III from 5-aminolevulinate: step 4/4. Its function is as follows. Catalyzes the decarboxylation of four acetate groups of uroporphyrinogen-III to yield coproporphyrinogen-III. The sequence is that of Uroporphyrinogen decarboxylase from Prochlorococcus marinus (strain MIT 9211).